The following is a 278-amino-acid chain: Orotidine 5'-phosphate decarboxylase (278 aa).

K95 (proton donor) is an active-site residue.

The protein belongs to the OMP decarboxylase family. Type 2 subfamily.

The catalysed reaction is orotidine 5'-phosphate + H(+) = UMP + CO2. Its pathway is pyrimidine metabolism; UMP biosynthesis via de novo pathway; UMP from orotate: step 2/2. This Mycobacterium marinum (strain ATCC BAA-535 / M) protein is Orotidine 5'-phosphate decarboxylase.